A 493-amino-acid chain; its full sequence is Guanosine-5'-triphosphate,3'-diphosphate pyrophosphatase (493 aa).

This sequence belongs to the GppA/Ppx family. GppA subfamily.

The catalysed reaction is guanosine 3'-diphosphate 5'-triphosphate + H2O = guanosine 3',5'-bis(diphosphate) + phosphate + H(+). Its pathway is purine metabolism; ppGpp biosynthesis; ppGpp from GTP: step 2/2. Its function is as follows. Catalyzes the conversion of pppGpp to ppGpp. Guanosine pentaphosphate (pppGpp) is a cytoplasmic signaling molecule which together with ppGpp controls the 'stringent response', an adaptive process that allows bacteria to respond to amino acid starvation, resulting in the coordinated regulation of numerous cellular activities. This is Guanosine-5'-triphosphate,3'-diphosphate pyrophosphatase from Salmonella dublin (strain CT_02021853).